Reading from the N-terminus, the 89-residue chain is Small ribosomal subunit protein uS15 (89 aa).

The disordered stretch occupies residues 1 to 23 (MALTKERTASVVQQYGSGEKDTG).

It belongs to the universal ribosomal protein uS15 family. In terms of assembly, part of the 30S ribosomal subunit. Forms a bridge to the 50S subunit in the 70S ribosome, contacting the 23S rRNA.

In terms of biological role, one of the primary rRNA binding proteins, it binds directly to 16S rRNA where it helps nucleate assembly of the platform of the 30S subunit by binding and bridging several RNA helices of the 16S rRNA. Its function is as follows. Forms an intersubunit bridge (bridge B4) with the 23S rRNA of the 50S subunit in the ribosome. This chain is Small ribosomal subunit protein uS15, found in Treponema pallidum (strain Nichols).